The following is a 269-amino-acid chain: Tryptophan synthase alpha chain (269 aa).

Residues glutamate 56 and aspartate 67 each act as proton acceptor in the active site.

Belongs to the TrpA family. As to quaternary structure, tetramer of two alpha and two beta chains.

The catalysed reaction is (1S,2R)-1-C-(indol-3-yl)glycerol 3-phosphate + L-serine = D-glyceraldehyde 3-phosphate + L-tryptophan + H2O. Its pathway is amino-acid biosynthesis; L-tryptophan biosynthesis; L-tryptophan from chorismate: step 5/5. The alpha subunit is responsible for the aldol cleavage of indoleglycerol phosphate to indole and glyceraldehyde 3-phosphate. This is Tryptophan synthase alpha chain from Mycobacterium ulcerans (strain Agy99).